We begin with the raw amino-acid sequence, 515 residues long: ATP synthase subunit alpha (515 aa).

169 to 176 provides a ligand contact to ATP; that stretch reads GDRQTGKT.

This sequence belongs to the ATPase alpha/beta chains family. F-type ATPases have 2 components, CF(1) - the catalytic core - and CF(0) - the membrane proton channel. CF(1) has five subunits: alpha(3), beta(3), gamma(1), delta(1), epsilon(1). CF(0) has three main subunits: a(1), b(2) and c(9-12). The alpha and beta chains form an alternating ring which encloses part of the gamma chain. CF(1) is attached to CF(0) by a central stalk formed by the gamma and epsilon chains, while a peripheral stalk is formed by the delta and b chains.

It localises to the cell inner membrane. It catalyses the reaction ATP + H2O + 4 H(+)(in) = ADP + phosphate + 5 H(+)(out). Produces ATP from ADP in the presence of a proton gradient across the membrane. The alpha chain is a regulatory subunit. The polypeptide is ATP synthase subunit alpha (Myxococcus xanthus).